A 238-amino-acid polypeptide reads, in one-letter code: uncharacterized protein (238 aa).

2 disordered regions span residues 123-167 (FRQG…VHGG) and 180-238 (SAMG…AKRR). Over residues 152-161 (SGHSPSPGRH) the composition is skewed to low complexity. Basic residues predominate over residues 207 to 238 (HRGHGHRFRLLAPRSRPRQRRGGGSRAAAKRR).

This sequence belongs to the PNP/MTAP phosphorylase family.

This is an uncharacterized protein from Rhodospirillum rubrum.